We begin with the raw amino-acid sequence, 370 residues long: Flagellar P-ring protein (370 aa).

Residues 1-21 form the signal peptide; it reads MKYILIKLSIVMIFIINSASK.

It belongs to the FlgI family. As to quaternary structure, the basal body constitutes a major portion of the flagellar organelle and consists of four rings (L,P,S, and M) mounted on a central rod.

It is found in the bacterial flagellum basal body. Assembles around the rod to form the L-ring and probably protects the motor/basal body from shearing forces during rotation. This chain is Flagellar P-ring protein, found in Wigglesworthia glossinidia brevipalpis.